Here is a 395-residue protein sequence, read N- to C-terminus: Xylose isomerase (395 aa).

Residues His-54 and Asp-57 contribute to the active site. Residues Glu-181, Glu-217, His-220, Asp-245, Asp-255, Asp-257, and Asp-293 each contribute to the Mg(2+) site.

The protein belongs to the xylose isomerase family. Homotetramer. Mg(2+) serves as cofactor.

The protein localises to the cytoplasm. It catalyses the reaction alpha-D-xylose = alpha-D-xylulofuranose. The chain is Xylose isomerase from Arthrobacter sp. (strain FB24).